The following is a 132-amino-acid chain: Small ribosomal subunit protein uS11 (132 aa).

This sequence belongs to the universal ribosomal protein uS11 family. Part of the 30S ribosomal subunit. Interacts with proteins S7 and S18. Binds to IF-3.

Located on the platform of the 30S subunit, it bridges several disparate RNA helices of the 16S rRNA. Forms part of the Shine-Dalgarno cleft in the 70S ribosome. In Chlamydia trachomatis serovar D (strain ATCC VR-885 / DSM 19411 / UW-3/Cx), this protein is Small ribosomal subunit protein uS11.